The sequence spans 1372 residues: DNA-directed RNA polymerase subunit beta (1372 aa).

The protein belongs to the RNA polymerase beta chain family. The RNAP catalytic core consists of 2 alpha, 1 beta, 1 beta' and 1 omega subunit. When a sigma factor is associated with the core the holoenzyme is formed, which can initiate transcription.

The enzyme catalyses RNA(n) + a ribonucleoside 5'-triphosphate = RNA(n+1) + diphosphate. DNA-dependent RNA polymerase catalyzes the transcription of DNA into RNA using the four ribonucleoside triphosphates as substrates. The sequence is that of DNA-directed RNA polymerase subunit beta from Psychrobacter cryohalolentis (strain ATCC BAA-1226 / DSM 17306 / VKM B-2378 / K5).